Here is a 411-residue protein sequence, read N- to C-terminus: Mannan endo-1,4-beta-mannosidase 1 (411 aa).

An N-terminal signal peptide occupies residues 1–17 (MLNILPFFLFFLPFLIG). N-linked (GlcNAc...) asparagine glycosylation occurs at N33. Substrate is bound by residues W87 and N197. E198 serves as the catalytic Proton donor. Residue N202 is glycosylated (N-linked (GlcNAc...) asparagine). Y277 lines the substrate pocket. E319 acts as the Nucleophile in catalysis. Substrate is bound at residue W361. 2 N-linked (GlcNAc...) asparagine glycosylation sites follow: N366 and N384.

It belongs to the glycosyl hydrolase 5 (cellulase A) family. In terms of tissue distribution, expressed in roots, stems and flowers.

It localises to the secreted. The catalysed reaction is Random hydrolysis of (1-&gt;4)-beta-D-mannosidic linkages in mannans, galactomannans and glucomannans.. This Arabidopsis thaliana (Mouse-ear cress) protein is Mannan endo-1,4-beta-mannosidase 1 (MAN1).